Reading from the N-terminus, the 474-residue chain is B-cell CLL/lymphoma 6 member B protein (474 aa).

The 68-residue stretch at 38–105 folds into the BTB domain; the sequence is TDVTLLVGGQ…MYTSRLRLSP (68 aa). Disordered regions lie at residues 144–190 and 210–249; these read PVEV…PDPK and GSLV…GLQS. A compositionally biased stretch (pro residues) spans 150–160; it reads PRPPTVAPPGS. Over residues 162–172 the composition is skewed to basic and acidic residues; the sequence is RRSEGHPDPPT. 3 stretches are compositionally biased toward polar residues: residues 173–183, 210–220, and 240–249; these read ESRSCSQGSPS, GSLVGESSGQP, and EEGTTPGLQS. 5 C2H2-type zinc fingers span residues 323-345, 351-373, 379-401, 407-429, and 435-458; these read YKCQ…RTVH, YRCS…SRIH, YKCE…VLIH, YPCP…VRIH, and YHCD…RQKH.

As to quaternary structure, associates with BCL6 through the BTB domain. Ubiquitously expressed with higher expression found in heart and lung.

It is found in the nucleus. Acts as a sequence-specific transcriptional repressor in association with BCL6. Necessary for activation of naive T-cells to antigenic stimulation. May attenuate the regulatory effect of BCL6 on antigenic activation of naive CD4 T-cells by forming a heterodimer with BCL6. The protein is B-cell CLL/lymphoma 6 member B protein (Bcl6b) of Mus musculus (Mouse).